Here is a 977-residue protein sequence, read N- to C-terminus: MEEDLKKTGYLFGGNAVFVDELYRQYLANPASVDQTWQEFFAGIKDNSTVLNKSTAKIIIPYEIKKEPLNNNLSSEVLNNRHLAKPAYREEFKGDTERSTAAYIDIREDASTGSTSKLPLEAKFGKMSSLKAKEMINTYRKHAHYLANLDPLGLELRKTKNDLKLNIETFGLDNSQLEKNINITDEFVGNWNCKLSELVTKLDKTYTGSIGVEFEQIENVEEKNWLYNKLESEVTFSSEDKKTILNDLVEVEGFEQYLHTKFPGAKRFSVEGGDASIVAMSKAIDLSMNQGVEEIVIGMAHRGRLNTLTKVVGKPYKAVIAGFISGSVFPDELNVSGDVKYHLGYSSDRTIDNKKIHLSLADNPSHLEAVNPIVAGKVRAKQDILGDTKRSKVKAILVHGDAAFCGQGVVAESLSMSPLAAYDIGGILHFVINNQLGFTANAADTRASRYSTEFAKIIAAPILHVNGDDIEAVLKATNIAVEYRQKFGKDVVVEIICYRKYGHNEGDEPMYTQGKMYNIIKSKPTPGNIYANELVKSGIIDNNYFAKLKEEFKAKLDKEFEQAKNYKPEAHFLGGLWQGISRIRTQAAITGVGKKTLQDLGTKLCEIPKDFAVNPKLVKLFEARKATLTSDQPIDWATAEQLAFASLLSEGTNIRLTGQDCGRGTFSHRHSVLHNQIDDTTYIPLNNLSKTQAKYEVADSNLSEYAVLGFEYGYSLANPKNLVLWEAQFGDFANGAQIIFDQFISSSETKWLRMSGLVVLLPHAFEGQGPEHSSARLERFLQLAAEDNMYVTYPTTPASIFHLLRRQILDDTRKPLIIMSPKSLLRHKYAVSKLDELGENTTFLPVLDEVNKVDTNNITKVILCSGKVYYDLFEMRGNNSNIAIIRLEQLYPFEKKLVASLLKKYNRTQEFIWCQEEPKNMGAWRYIVSHLNDVLKEAGINNEFKYVGREESASPAVGSLQAHNKQQEKLLKEALGM.

Residues 77–125 (VLNNRHLAKPAYREEFKGDTERSTAAYIDIREDASTGSTSKLPLEAKFG) form the RPE1 insert domain.

This sequence belongs to the alpha-ketoglutarate dehydrogenase family. As to quaternary structure, homodimer. Part of the 2-oxoglutarate dehydrogenase (OGDH) complex composed of E1 (2-oxoglutarate dehydrogenase), E2 (dihydrolipoamide succinyltransferase) and E3 (dihydrolipoamide dehydrogenase); the complex contains multiple copies of the three enzymatic components (E1, E2 and E3). Thiamine diphosphate serves as cofactor.

The catalysed reaction is N(6)-[(R)-lipoyl]-L-lysyl-[protein] + 2-oxoglutarate + H(+) = N(6)-[(R)-S(8)-succinyldihydrolipoyl]-L-lysyl-[protein] + CO2. Functionally, E1 component of the 2-oxoglutarate dehydrogenase (OGDH) complex which catalyzes the decarboxylation of 2-oxoglutarate, the first step in the conversion of 2-oxoglutarate to succinyl-CoA and CO(2). The polypeptide is 2-oxoglutarate dehydrogenase E1 component (sucA) (Rickettsia felis (strain ATCC VR-1525 / URRWXCal2) (Rickettsia azadi)).